Reading from the N-terminus, the 175-residue chain is Peptide methionine sulfoxide reductase MsrA (175 aa).

Residue C10 is part of the active site.

Belongs to the MsrA Met sulfoxide reductase family.

It catalyses the reaction L-methionyl-[protein] + [thioredoxin]-disulfide + H2O = L-methionyl-(S)-S-oxide-[protein] + [thioredoxin]-dithiol. The enzyme catalyses [thioredoxin]-disulfide + L-methionine + H2O = L-methionine (S)-S-oxide + [thioredoxin]-dithiol. Has an important function as a repair enzyme for proteins that have been inactivated by oxidation. Catalyzes the reversible oxidation-reduction of methionine sulfoxide in proteins to methionine. This is Peptide methionine sulfoxide reductase MsrA from Psychrobacter sp. (strain PRwf-1).